The primary structure comprises 133 residues: Large-conductance mechanosensitive channel (133 aa).

Helical transmembrane passes span 14-34 and 67-87; these read VIDLAVGVVIGAAFGKIVSSL and GNFIQTIFDFLIIAAAIFMFV.

It belongs to the MscL family. Homopentamer.

Its subcellular location is the cell membrane. Its function is as follows. Channel that opens in response to stretch forces in the membrane lipid bilayer. May participate in the regulation of osmotic pressure changes within the cell. The sequence is that of Large-conductance mechanosensitive channel from Bacillus mycoides (strain KBAB4) (Bacillus weihenstephanensis).